A 164-amino-acid chain; its full sequence is UPF0114 protein Sbal223_3668 (164 aa).

4 consecutive transmembrane segments (helical) span residues 15–35, 53–73, 108–128, and 136–156; these read IMAPIYLGLSLVLIGLGIKFF, LVLVTLSLIDITLVGGLIVMV, KVAASIVAISSIHLLKIFMDV, and IMWYLLIHITFVLSAFAMGYL.

It belongs to the UPF0114 family.

Its subcellular location is the cell membrane. The sequence is that of UPF0114 protein Sbal223_3668 from Shewanella baltica (strain OS223).